Consider the following 397-residue polypeptide: Ribosomal RNA large subunit methyltransferase I (397 aa).

The PUA domain maps to 2 to 82 (TTSIYLVKGR…EVINVDFFVK (81 aa)).

Belongs to the methyltransferase superfamily. RlmI family.

It localises to the cytoplasm. The enzyme catalyses cytidine(1962) in 23S rRNA + S-adenosyl-L-methionine = 5-methylcytidine(1962) in 23S rRNA + S-adenosyl-L-homocysteine + H(+). Functionally, specifically methylates the cytosine at position 1962 (m5C1962) of 23S rRNA. This chain is Ribosomal RNA large subunit methyltransferase I, found in Photobacterium profundum (strain SS9).